Consider the following 123-residue polypeptide: UPF0102 protein APP7_1414 (123 aa).

This sequence belongs to the UPF0102 family.

The chain is UPF0102 protein APP7_1414 from Actinobacillus pleuropneumoniae serotype 7 (strain AP76).